We begin with the raw amino-acid sequence, 106 residues long: UPF0145 protein VCM66_A0911 (106 aa).

The protein belongs to the UPF0145 family.

This Vibrio cholerae serotype O1 (strain M66-2) protein is UPF0145 protein VCM66_A0911.